The chain runs to 271 residues: UPF0328 protein ECU09_0020 (271 aa).

It belongs to the UPF0328 family.

The polypeptide is UPF0328 protein ECU09_0020 (Encephalitozoon cuniculi (strain GB-M1) (Microsporidian parasite)).